Here is a 486-residue protein sequence, read N- to C-terminus: Cysteine--tRNA ligase (486 aa).

Cysteine 29 contacts Zn(2+). Residues 31–41 carry the 'HIGH' region motif; the sequence is VTVYDYCHLGH. Zn(2+)-binding residues include cysteine 217, histidine 242, and glutamate 246. Positions 274–278 match the 'KMSKS' region motif; it reads KMSKS. Lysine 277 is a binding site for ATP.

The protein belongs to the class-I aminoacyl-tRNA synthetase family. Monomer. Zn(2+) is required as a cofactor.

It is found in the cytoplasm. The enzyme catalyses tRNA(Cys) + L-cysteine + ATP = L-cysteinyl-tRNA(Cys) + AMP + diphosphate. This Thermosynechococcus vestitus (strain NIES-2133 / IAM M-273 / BP-1) protein is Cysteine--tRNA ligase.